Here is a 315-residue protein sequence, read N- to C-terminus: NAD(P)H-dependent anabolic L-arginine dehydrogenase DauB (315 aa).

This sequence belongs to the ornithine cyclodeaminase/mu-crystallin family.

It catalyses the reaction L-arginine + NAD(+) + H2O = 5-guanidino-2-oxopentanoate + NH4(+) + NADH + H(+). The enzyme catalyses L-arginine + NADP(+) + H2O = 5-guanidino-2-oxopentanoate + NH4(+) + NADPH + H(+). Functionally, involved in the anabolism of D-lysine and D-arginine. Under aerobic conditions, the arginine succinyltransferase (AST) and arginine transaminase (ATA) pathways are 2 major routes for L-arginine utilization as the sole source of carbon and nitrogen. The D-to-L racemization of arginine by DauA and DauB is necessary, before to be channeled into the AST and/or ATA pathways. DauB catalyzes the synthesis of L-arginine from 2-ketoarginine (2-KA) and ammonium. The protein is NAD(P)H-dependent anabolic L-arginine dehydrogenase DauB of Pseudomonas aeruginosa (strain ATCC 15692 / DSM 22644 / CIP 104116 / JCM 14847 / LMG 12228 / 1C / PRS 101 / PAO1).